The chain runs to 359 residues: MIAAQAKLVYQLNKYYSERCQARKGAIAKTIREVCKVVSDVLKEVEVQEPRFISSLTEIDARYEGLEVVCPTEFEVVLYLNQMGVFNFVDDGSLPGCAVLKLSDGRKRSMSLWVEFITASGYLSARKIRSRFQTLVAQAVDKCSYRDVVKMIADTSEVKLRIRERYIVQITPAFKCTGIWPRSAAQWPLPHIPWPGPNRVAEVKAEGFNLLSKECYSLTGKQSSAESDAWVLQFAEAENRLLLGGCRGKCLSVLKTLRDRHLELPGQPLNNYHMKTLLLYECEKHPRETDWDEACLGDRLNGILLQLISCLQCRRCPHYFLPNLDLFQGKPHSALESAAKQTWRLAREILTNPKSLDKL.

Belongs to the mab-21 family.

It is found in the nucleus. Its subcellular location is the cytoplasm. Required for normal development of the eye. May promote dorsalization of the developing embryo by antagonizing the ventralizing factor bmp4. Functional antagonism of bmp4 may require interaction with smad1. Required for gastrulation and subsequent neural development. May function as a transcriptional repressor. The sequence is that of Protein mab-21-like 2-A (mab21l2-a) from Xenopus laevis (African clawed frog).